Consider the following 846-residue polypeptide: Translation initiation factor IF-2 (846 aa).

The interval 198 to 219 (YKREEEEKKSKAKKAGGKGFKK) is disordered. Residues 207–219 (SKAKKAGGKGFKK) show a composition bias toward basic residues. The tr-type G domain occupies 345–512 (SRAPVVTIMG…AVLLQSEVLE (168 aa)). The G1 stretch occupies residues 354-361 (GHVDHGKT). Position 354–361 (354–361 (GHVDHGKT)) interacts with GTP. Residues 379–383 (GITQH) form a G2 region. Positions 400 to 403 (DTPG) are G3. Residues 400 to 404 (DTPGH) and 454 to 457 (NKID) each bind GTP. The tract at residues 454-457 (NKID) is G4. Residues 490–492 (SAK) form a G5 region.

This sequence belongs to the TRAFAC class translation factor GTPase superfamily. Classic translation factor GTPase family. IF-2 subfamily.

It is found in the cytoplasm. In terms of biological role, one of the essential components for the initiation of protein synthesis. Protects formylmethionyl-tRNA from spontaneous hydrolysis and promotes its binding to the 30S ribosomal subunits. Also involved in the hydrolysis of GTP during the formation of the 70S ribosomal complex. In Francisella tularensis subsp. tularensis (strain SCHU S4 / Schu 4), this protein is Translation initiation factor IF-2.